The chain runs to 418 residues: Serum response factor homolog A (418 aa).

Disordered regions lie at residues 14-67 (LGNV…GKKA), 144-170 (CLNT…LLQQ), 301-351 (RLGK…NNNS), and 388-418 (SSSS…FPPC). Composition is skewed to low complexity over residues 22-39 (PSSP…PTST) and 51-61 (TSEPSSPSTGE). The MADS-box domain maps to 67–127 (AGRRKIKIEF…GHVYTFATAK (61 aa)). 3 stretches are compositionally biased toward low complexity: residues 150–170 (NPNS…LLQQ), 306–351 (NNNN…NNNS), and 388–399 (SSSSASSSPASP). Positions 400–418 (NQFNYSNHSMPLNNQFPPC) are enriched in polar residues.

It localises to the nucleus. Required for proper slug migration, spore differentiation and stalk differentiation (under nonbuffered conditions). Could be involved in late events of spore maturation necessary for spore stability. This Dictyostelium discoideum (Social amoeba) protein is Serum response factor homolog A (srfA).